We begin with the raw amino-acid sequence, 89 residues long: Small ribosomal subunit protein uS15 (89 aa).

The protein belongs to the universal ribosomal protein uS15 family. As to quaternary structure, part of the 30S ribosomal subunit. Forms a bridge to the 50S subunit in the 70S ribosome, contacting the 23S rRNA.

Its function is as follows. One of the primary rRNA binding proteins, it binds directly to 16S rRNA where it helps nucleate assembly of the platform of the 30S subunit by binding and bridging several RNA helices of the 16S rRNA. Forms an intersubunit bridge (bridge B4) with the 23S rRNA of the 50S subunit in the ribosome. The protein is Small ribosomal subunit protein uS15 of Dictyoglomus thermophilum (strain ATCC 35947 / DSM 3960 / H-6-12).